Consider the following 309-residue polypeptide: Olfactory receptor 7A17 (309 aa).

The Extracellular segment spans residues 1 to 25 (MEPENDTGISEFVLLGLSEEPELQP). N-linked (GlcNAc...) asparagine glycosylation occurs at Asn-5. The chain crosses the membrane as a helical span at residues 26 to 46 (FLFGLFLSMYLVTVLGNLLII). Topologically, residues 47–54 (LATISDSH) are cytoplasmic. Residues 55–75 (LHTPMYFFLSNLSFADICFIS) traverse the membrane as a helical segment. Topologically, residues 76–99 (TTIPKMLINIQTQSRVITYAGCIT) are extracellular. Cys-97 and Cys-189 form a disulfide bridge. A helical transmembrane segment spans residues 100–120 (QMCFFVLFGGLDSLLLAVMAY). The Cytoplasmic segment spans residues 121 to 139 (DRFVAICHPLHYTVIMNPR). The chain crosses the membrane as a helical span at residues 140–160 (LCGLLVLASWMIAALNSLSQS). The Extracellular segment spans residues 161–197 (LMVLWLSFCTDLEIPHFFCELNQVIHLACSDTFLNDM). A helical transmembrane segment spans residues 198–217 (GMYFAAGLLAGGPLVGILCS). The Cytoplasmic portion of the chain corresponds to 218–237 (YSKIVSSIRAISSAQGKYKA). A helical membrane pass occupies residues 238–258 (FSTCASHLSVVSLFCCTGLGV). Residues 259 to 271 (YLTSAATHNSHTS) lie on the Extracellular side of the membrane. A helical transmembrane segment spans residues 272–292 (ATASVMYTVATPMLNPFIYSL). At 293-309 (RNKDIKRALKMSFRGKQ) the chain is on the cytoplasmic side.

This sequence belongs to the G-protein coupled receptor 1 family.

The protein resides in the cell membrane. Functionally, odorant receptor. In Homo sapiens (Human), this protein is Olfactory receptor 7A17 (OR7A17).